Here is a 298-residue protein sequence, read N- to C-terminus: (DL)-glycerol-3-phosphatase 1, mitochondrial (298 aa).

The N-terminal 46 residues, 1–46 (MLTTPTRFVALRIPFRSSNKIPISIAPSPKVFPRKPVIRVPASLRF), are a transit peptide targeting the mitochondrion. Asp-77 (nucleophile) is an active-site residue. Residues Asp-77, Asp-79, and Asp-242 each contribute to the Mg(2+) site. Asp-79 acts as the Proton donor in catalysis.

This sequence belongs to the HAD-like hydrolase superfamily. DOG/GPP family. Requires Mg(2+) as cofactor. In terms of tissue distribution, ubiquitous with highest expression in siliques. Mainly restricted to the meristem of immature flower and vascular elements of the root, shoot, leave, siliqua and developing embryo (at the protein level).

It is found in the mitochondrion. The enzyme catalyses sn-glycerol 1-phosphate + H2O = glycerol + phosphate. It carries out the reaction sn-glycerol 3-phosphate + H2O = glycerol + phosphate. It catalyses the reaction 5-amino-6-(5-phospho-D-ribitylamino)uracil + H2O = 5-amino-6-(D-ribitylamino)uracil + phosphate. Its function is as follows. Acts as a glycerol-3-phosphatase with higher stereospecificity for L-glycerol-3-phosphate than DL-glycerol-3-phosphate. Can also dephosphorylate in vitro 5-amino-6-(5-phospho-D-ribitylamino)uracil, also known as ARPP. The chain is (DL)-glycerol-3-phosphatase 1, mitochondrial from Arabidopsis thaliana (Mouse-ear cress).